Reading from the N-terminus, the 542-residue chain is Putative serine/threonine-protein kinase L205 (542 aa).

Basic and acidic residues predominate over residues 20–30 (FEKKSVGHNSD). Residues 20–49 (FEKKSVGHNSDDEYDDTVPYNEDDETSEEE) are disordered. Acidic residues predominate over residues 31-49 (DEYDDTVPYNEDDETSEEE). In terms of domain architecture, Protein kinase spans 69-538 (YLLLKKIGSG…ADELLKHPWL (470 aa)). Residues 75–83 (IGSGNNASV) and Lys-98 contribute to the ATP site. The active-site Proton acceptor is Asp-201. Positions 278 to 314 (EELIPDDPDNNEKYYDSTDSEEYDYSDNSDYYDDDED) are disordered. Acidic residues predominate over residues 295-314 (TDSEEYDYSDNSDYYDDDED).

It belongs to the protein kinase superfamily. Ser/Thr protein kinase family.

The catalysed reaction is L-seryl-[protein] + ATP = O-phospho-L-seryl-[protein] + ADP + H(+). It catalyses the reaction L-threonyl-[protein] + ATP = O-phospho-L-threonyl-[protein] + ADP + H(+). The sequence is that of Putative serine/threonine-protein kinase L205 from Acanthamoeba polyphaga (Amoeba).